The chain runs to 434 residues: D-amino acid dehydrogenase (434 aa).

Residue 3–17 participates in FAD binding; that stretch reads VIVLGSGVIGTTTAY.

This sequence belongs to the DadA oxidoreductase family. The cofactor is FAD.

The catalysed reaction is a D-alpha-amino acid + A + H2O = a 2-oxocarboxylate + AH2 + NH4(+). The protein operates within amino-acid degradation; D-alanine degradation; NH(3) and pyruvate from D-alanine: step 1/1. In terms of biological role, oxidative deamination of D-amino acids. The polypeptide is D-amino acid dehydrogenase (Bordetella petrii (strain ATCC BAA-461 / DSM 12804 / CCUG 43448)).